Consider the following 1166-residue polypeptide: Reverse gyrase 2 (1166 aa).

The segment at 1-40 (MINVMYKNSCPNCGGDISGDRLLNGLPCEACLPYINGIDD) adopts an RG N-terminal-type zinc-finger fold. Positions 10, 13, 28, and 31 each coordinate Zn(2+). ATP contacts are provided by residues glutamine 92 and 109-116 (APTGLGKT). One can recognise a Helicase ATP-binding domain in the interval 96 to 285 (LRRLASNQSF…ALRLLTGFEP (190 aa)). A DEAD box motif is present at residues 190-193 (DDAD). The interval 576–1166 (FNISTGLLIV…VNPLKSEQNV (591 aa)) is topoisomerase I. In terms of domain architecture, Toprim spans 580-743 (TGLLIVESPT…NVYRVVYHEI (164 aa)). A Mg(2+)-binding site is contributed by glutamate 586. The RG C-terminal-type zinc-finger motif lies at 662 to 689 (IKKCLDCNKIFSSASDKCPYCGSANLQS). Positions 665, 668, 679, and 682 each coordinate Zn(2+). Aspartate 712 contributes to the Mg(2+) binding site. Positions 759 to 1157 (NTNLVMSQIV…EIFSEISTLV (399 aa)) constitute a Topo IA-type catalytic domain. Tyrosine 903 functions as the O-(5'-phospho-DNA)-tyrosine intermediate in the catalytic mechanism.

In the N-terminal section; belongs to the DEAD box helicase family. DDVD subfamily. This sequence in the C-terminal section; belongs to the type IA topoisomerase family. As to quaternary structure, monomer. The cofactor is Zn(2+). Mg(2+) is required as a cofactor.

Its subcellular location is the cytoplasm. The catalysed reaction is ATP + H2O = ADP + phosphate + H(+). At least one of the 2 proteins is inhibited by actinomycin D. Less sensitive to NaCl than TopR1, maximal positive supercoiling is observed with 100 mM NaCl; as NaCl rises higher than 400 mM supercoiling decreases. At 600 mM NaCl relaxes but does not introduce positive supercoils into negatively supercoiled substrate. In terms of biological role, modifies the topological state of DNA by introducing positive supercoils in an ATP-dependent process. A highly processive enzyme, it introduces a large number of positive supercoils directly in a negatively supercoiled substrate. At 75 degrees Celsius introduces more than 23 positive supercoils into pTZ18R DNA (probably 2860 bp), more than TopR1; unlike TopR1 little to no relaxation of the negatively supercoiled substrate is seen in the presence of ATP, in the absence of ATP no activity is seen. At 45 degrees Celsius the enzyme is slower and in vitro individual steps can be detected. It cleaves transiently a single DNA strand and remains covalently bound to the 5' DNA end through a tyrosine residue. May be involved in DNA damage response. May be involved in rewinding the DNA strands in the regions of the chromosome that have opened up to allow transcription or replication. There are 2 genes for this protein in the cell. During exponential growth this is the more highly expressed isoform (about 125 molecules per cell at 80 degrees Celsius, about 117 molecules at 88 degrees Celsius); this isoform is less active at higher temperature. Grows actively at both 80 and 88 degrees Celsius; survives a long exposure at 45 degrees Celsius without DNA replication or cell division occurring. Experiments using whole cell extracts do not distinguish which isoform is present, the results are probably a mixture of the two forms. The polypeptide is Reverse gyrase 2 (Saccharolobus solfataricus (strain ATCC 35092 / DSM 1617 / JCM 11322 / P2) (Sulfolobus solfataricus)).